The chain runs to 870 residues: DNA mismatch repair protein MutS (870 aa).

616–623 (GPNMAGKS) contacts ATP.

This sequence belongs to the DNA mismatch repair MutS family.

Its function is as follows. This protein is involved in the repair of mismatches in DNA. It is possible that it carries out the mismatch recognition step. This protein has a weak ATPase activity. This is DNA mismatch repair protein MutS from Parabacteroides distasonis (strain ATCC 8503 / DSM 20701 / CIP 104284 / JCM 5825 / NCTC 11152).